Consider the following 393-residue polypeptide: Actin-related protein 2 (393 aa).

Residues 158–160 (GDG), 212–216 (RQMKE), and 303–308 (GGTTMY) contribute to the ATP site.

It belongs to the actin family. ARP2 subfamily. As to quaternary structure, component of the Arp2/3 complex.

It localises to the cytoplasm. The protein resides in the cytoskeleton. Functions as ATP-binding component of the Arp2/3 complex which is involved in regulation of actin polymerization and together with an activating nucleation-promoting factor (NPF) mediates the formation of branched actin networks. Seems to contact the pointed end of the daughter actin filament. This chain is Actin-related protein 2 (arx-2), found in Caenorhabditis briggsae.